Here is a 510-residue protein sequence, read N- to C-terminus: Beta-galactosidase (510 aa).

Glu-210 acts as the Proton donor in catalysis. The active-site Nucleophile is Glu-414.

This sequence belongs to the glycosyl hydrolase 1 family.

The enzyme catalyses Hydrolysis of terminal non-reducing beta-D-galactose residues in beta-D-galactosides.. The polypeptide is Beta-galactosidase (Pyrococcus woesei).